We begin with the raw amino-acid sequence, 54 residues long: Gene product 16.6 (54 aa).

This sequence belongs to the phi29likevirus gp16.6 family.

The sequence is that of Gene product 16.6 (16.6) from Bacillus subtilis (Bacteriophage phi-15).